The chain runs to 406 residues: Sprouty-related, EVH1 domain-containing protein 1 (406 aa).

One can recognise a WH1 domain in the interval 3 to 120 (GEQEPDDSYA…RGIRRAIEDL (118 aa)). The interval 124-154 (LPASCHGESETSEDGPQVNKEDHYSTHNNDH) is disordered. Residues 142 to 154 (NKEDHYSTHNNDH) are compositionally biased toward basic and acidic residues. Residues 195 to 247 (PIRHVSFQDEDEIVRINPRDMIIRRYADYRHPDIFRNDVDREEPEDVTFFTKT) enclose the KBD domain. The 109-residue stretch at 296 to 404 (SCVYCQERFN…CGCCGGKHKA (109 aa)) folds into the SPR domain.

In terms of processing, palmitoylated by ZDHHC17/HIP14. Ubiquitinated. Post-translationally, phosphorylated on tyrosine.

The protein localises to the cell membrane. Its function is as follows. Tyrosine kinase substrate that inhibits growth-factor-mediated activation of MAP kinase. The chain is Sprouty-related, EVH1 domain-containing protein 1 (spred1) from Xenopus tropicalis (Western clawed frog).